Consider the following 349-residue polypeptide: Peroxidase 22 (349 aa).

An N-terminal signal peptide occupies residues 1 to 29; that stretch reads MGFSPSFSCSAIGALILGCLLLQASNSNA. A Pyrrolidone carboxylic acid modification is found at Q30. Disulfide bonds link C40–C120, C73–C78, C126–C329, and C206–C238. H71 acts as the Proton acceptor in catalysis. Positions 72, 75, 77, 79, and 81 each coordinate Ca(2+). N86 carries N-linked (GlcNAc...) asparagine glycosylation. P168 is a substrate binding site. N173 and N187 each carry an N-linked (GlcNAc...) asparagine glycan. H199 is a heme b binding site. Ca(2+) is bound at residue T200. N-linked (GlcNAc...) asparagine glycosylation is found at N217 and N243. Ca(2+)-binding residues include D251, T254, and D259.

It belongs to the peroxidase family. Classical plant (class III) peroxidase subfamily. Requires heme b as cofactor. It depends on Ca(2+) as a cofactor. Mainly expressed in roots.

The protein localises to the secreted. It is found in the vacuole. It carries out the reaction 2 a phenolic donor + H2O2 = 2 a phenolic radical donor + 2 H2O. Functionally, removal of H(2)O(2), oxidation of toxic reductants, biosynthesis and degradation of lignin, suberization, auxin catabolism, response to environmental stresses such as wounding, pathogen attack and oxidative stress. These functions might be dependent on each isozyme/isoform in each plant tissue. The polypeptide is Peroxidase 22 (PER22) (Arabidopsis thaliana (Mouse-ear cress)).